Consider the following 149-residue polypeptide: Nucleoside diphosphate kinase 1 (149 aa).

Residue Met1 is modified to N-acetylmethionine. Residues Lys9, Phe57, Arg85, Thr91, Arg102, and Asn112 each contribute to the ATP site. Catalysis depends on His115, which acts as the Pros-phosphohistidine intermediate.

This sequence belongs to the NDK family. In terms of assembly, interacts with CAT1, CAT2 and CAT3. Mg(2+) is required as a cofactor.

The protein localises to the peroxisome. It is found in the nucleus. The protein resides in the cytoplasm. The catalysed reaction is a 2'-deoxyribonucleoside 5'-diphosphate + ATP = a 2'-deoxyribonucleoside 5'-triphosphate + ADP. It catalyses the reaction a ribonucleoside 5'-diphosphate + ATP = a ribonucleoside 5'-triphosphate + ADP. Major role in the synthesis of nucleoside triphosphates other than ATP. The ATP gamma phosphate is transferred to the NDP beta phosphate via a ping-pong mechanism, using a phosphorylated active-site intermediate. Plays a role in response to reactive oxygen species (ROS) stress. The polypeptide is Nucleoside diphosphate kinase 1 (NDK1) (Arabidopsis thaliana (Mouse-ear cress)).